We begin with the raw amino-acid sequence, 297 residues long: tRNA dimethylallyltransferase (297 aa).

ATP is bound at residue 15 to 22 (GPTASGKS). Substrate is bound at residue 17-22 (TASGKS). Interaction with substrate tRNA stretches follow at residues 40–43 (DSMQ) and 164–168 (QRIVR).

The protein belongs to the IPP transferase family. In terms of assembly, monomer. Mg(2+) serves as cofactor.

The catalysed reaction is adenosine(37) in tRNA + dimethylallyl diphosphate = N(6)-dimethylallyladenosine(37) in tRNA + diphosphate. In terms of biological role, catalyzes the transfer of a dimethylallyl group onto the adenine at position 37 in tRNAs that read codons beginning with uridine, leading to the formation of N6-(dimethylallyl)adenosine (i(6)A). This is tRNA dimethylallyltransferase from Rhizobium johnstonii (strain DSM 114642 / LMG 32736 / 3841) (Rhizobium leguminosarum bv. viciae).